Here is a 314-residue protein sequence, read N- to C-terminus: Probable cell division protein WhiA (314 aa).

Positions 274-308 form a DNA-binding region, H-T-H motif; sequence SLKELGEMMSTGKISKSGVNHRLRKLNEMADKLRS.

The protein belongs to the WhiA family.

In terms of biological role, involved in cell division and chromosome segregation. The chain is Probable cell division protein WhiA from Staphylococcus saprophyticus subsp. saprophyticus (strain ATCC 15305 / DSM 20229 / NCIMB 8711 / NCTC 7292 / S-41).